The following is a 273-amino-acid chain: Dermonecrotic toxin LspaSicTox-alphaIA1iii (273 aa).

His5 is a catalytic residue. Residues Glu25 and Asp27 each coordinate Mg(2+). The active-site Nucleophile is His41. Cystine bridges form between Cys45–Cys51 and Cys47–Cys190. Residue Asp85 participates in Mg(2+) binding.

This sequence belongs to the arthropod phospholipase D family. Class II subfamily. The cofactor is Mg(2+). Expressed by the venom gland.

It localises to the secreted. It catalyses the reaction an N-(acyl)-sphingosylphosphocholine = an N-(acyl)-sphingosyl-1,3-cyclic phosphate + choline. The catalysed reaction is an N-(acyl)-sphingosylphosphoethanolamine = an N-(acyl)-sphingosyl-1,3-cyclic phosphate + ethanolamine. It carries out the reaction a 1-acyl-sn-glycero-3-phosphocholine = a 1-acyl-sn-glycero-2,3-cyclic phosphate + choline. The enzyme catalyses a 1-acyl-sn-glycero-3-phosphoethanolamine = a 1-acyl-sn-glycero-2,3-cyclic phosphate + ethanolamine. Functionally, dermonecrotic toxins cleave the phosphodiester linkage between the phosphate and headgroup of certain phospholipids (sphingolipid and lysolipid substrates), forming an alcohol (often choline) and a cyclic phosphate. This toxin acts on sphingomyelin (SM). It may also act on ceramide phosphoethanolamine (CPE), lysophosphatidylcholine (LPC) and lysophosphatidylethanolamine (LPE), but not on lysophosphatidylserine (LPS), and lysophosphatidylglycerol (LPG). It acts by transphosphatidylation, releasing exclusively cyclic phosphate products as second products. Induces dermonecrosis, hemolysis, increased vascular permeability, edema, inflammatory response, and platelet aggregation. The sequence is that of Dermonecrotic toxin LspaSicTox-alphaIA1iii from Loxosceles spadicea (Recluse spider).